Reading from the N-terminus, the 504-residue chain is Anaerobic nitric oxide reductase transcription regulator NorR (504 aa).

A 4-aspartylphosphate modification is found at Asp-57. The Sigma-54 factor interaction domain occupies Met-187–Val-416. ATP contacts are provided by residues Gly-215 to Glu-222 and Ala-278 to Glu-287. The H-T-H motif DNA-binding region spans Trp-479 to Lys-498.

It functions in the pathway nitrogen metabolism; nitric oxide reduction. In terms of biological role, required for the expression of anaerobic nitric oxide (NO) reductase, acts as a transcriptional activator for at least the norVW operon. Activation also requires sigma-54. The protein is Anaerobic nitric oxide reductase transcription regulator NorR of Escherichia coli (strain ATCC 8739 / DSM 1576 / NBRC 3972 / NCIMB 8545 / WDCM 00012 / Crooks).